The following is a 517-amino-acid chain: ATP synthase subunit alpha (517 aa).

175-182 (GDRQTGKT) lines the ATP pocket.

It belongs to the ATPase alpha/beta chains family. As to quaternary structure, F-type ATPases have 2 components, CF(1) - the catalytic core - and CF(0) - the membrane proton channel. CF(1) has five subunits: alpha(3), beta(3), gamma(1), delta(1), epsilon(1). CF(0) has three main subunits: a(1), b(2) and c(9-12). The alpha and beta chains form an alternating ring which encloses part of the gamma chain. CF(1) is attached to CF(0) by a central stalk formed by the gamma and epsilon chains, while a peripheral stalk is formed by the delta and b chains.

Its subcellular location is the cell membrane. The catalysed reaction is ATP + H2O + 4 H(+)(in) = ADP + phosphate + 5 H(+)(out). Produces ATP from ADP in the presence of a proton gradient across the membrane. The alpha chain is a regulatory subunit. The sequence is that of ATP synthase subunit alpha from Herpetosiphon aurantiacus (strain ATCC 23779 / DSM 785 / 114-95).